Reading from the N-terminus, the 51-residue chain is Large ribosomal subunit protein eL39 (51 aa).

This sequence belongs to the eukaryotic ribosomal protein eL39 family.

This is Large ribosomal subunit protein eL39 from Hyperthermus butylicus (strain DSM 5456 / JCM 9403 / PLM1-5).